Here is a 138-residue protein sequence, read N- to C-terminus: Ribosome-binding factor A (138 aa).

The tract at residues 112–138 (EARTQGQEPAADVEPAPGAAPDDEAEE) is disordered. Residues 119 to 131 (EPAADVEPAPGAA) are compositionally biased toward low complexity.

This sequence belongs to the RbfA family. Monomer. Binds 30S ribosomal subunits, but not 50S ribosomal subunits or 70S ribosomes.

The protein resides in the cytoplasm. One of several proteins that assist in the late maturation steps of the functional core of the 30S ribosomal subunit. Associates with free 30S ribosomal subunits (but not with 30S subunits that are part of 70S ribosomes or polysomes). Required for efficient processing of 16S rRNA. May interact with the 5'-terminal helix region of 16S rRNA. The protein is Ribosome-binding factor A of Anaeromyxobacter dehalogenans (strain 2CP-C).